Reading from the N-terminus, the 344-residue chain is Holliday junction branch migration complex subunit RuvB (344 aa).

The interval 1 to 181 (MERIVTPAEM…FGVLCAMEYY (181 aa)) is large ATPase domain (RuvB-L). ATP-binding positions include L20, R21, G62, K65, T66, T67, 128-130 (EDY), R171, Y181, and R218. T66 contacts Mg(2+). Residues 182–252 (DENQLKEIVI…EAREALELLE (71 aa)) are small ATPAse domain (RuvB-S). A head domain (RuvB-H) region spans residues 255-344 (NQGFDKVDNK…SNKGQTSFFK (90 aa)). Residues R310 and R315 each coordinate DNA.

This sequence belongs to the RuvB family. Homohexamer. Forms an RuvA(8)-RuvB(12)-Holliday junction (HJ) complex. HJ DNA is sandwiched between 2 RuvA tetramers; dsDNA enters through RuvA and exits via RuvB. An RuvB hexamer assembles on each DNA strand where it exits the tetramer. Each RuvB hexamer is contacted by two RuvA subunits (via domain III) on 2 adjacent RuvB subunits; this complex drives branch migration. In the full resolvosome a probable DNA-RuvA(4)-RuvB(12)-RuvC(2) complex forms which resolves the HJ.

The protein localises to the cytoplasm. It carries out the reaction ATP + H2O = ADP + phosphate + H(+). In terms of biological role, the RuvA-RuvB-RuvC complex processes Holliday junction (HJ) DNA during genetic recombination and DNA repair, while the RuvA-RuvB complex plays an important role in the rescue of blocked DNA replication forks via replication fork reversal (RFR). RuvA specifically binds to HJ cruciform DNA, conferring on it an open structure. The RuvB hexamer acts as an ATP-dependent pump, pulling dsDNA into and through the RuvAB complex. RuvB forms 2 homohexamers on either side of HJ DNA bound by 1 or 2 RuvA tetramers; 4 subunits per hexamer contact DNA at a time. Coordinated motions by a converter formed by DNA-disengaged RuvB subunits stimulates ATP hydrolysis and nucleotide exchange. Immobilization of the converter enables RuvB to convert the ATP-contained energy into a lever motion, pulling 2 nucleotides of DNA out of the RuvA tetramer per ATP hydrolyzed, thus driving DNA branch migration. The RuvB motors rotate together with the DNA substrate, which together with the progressing nucleotide cycle form the mechanistic basis for DNA recombination by continuous HJ branch migration. Branch migration allows RuvC to scan DNA until it finds its consensus sequence, where it cleaves and resolves cruciform DNA. This chain is Holliday junction branch migration complex subunit RuvB, found in Clostridium botulinum (strain Alaska E43 / Type E3).